The primary structure comprises 273 residues: Protein N-terminal and lysine N-methyltransferase EFM7 (273 aa).

Residues 1–32 (MSDIEDLASGGLFDEPKDFYKPEEQPGSDSYA) are disordered. The span at 14 to 24 (DEPKDFYKPEE) shows a compositional bias: basic and acidic residues. S-adenosyl-L-methionine is bound by residues Trp65, 92–94 (GAG), Asp114, Trp161, and Ser183.

It belongs to the class I-like SAM-binding methyltransferase superfamily. EFM7 family.

The protein localises to the cytoplasm. Functionally, S-adenosyl-L-methionine-dependent protein methyltransferase that trimethylates the N-terminal glycine 'Gly-2' of elongation factor 1-alpha, before also catalyzing the mono- and dimethylation of 'Lys-3'. The polypeptide is Protein N-terminal and lysine N-methyltransferase EFM7 (Yarrowia lipolytica (strain CLIB 122 / E 150) (Yeast)).